Reading from the N-terminus, the 93-residue chain is Large ribosomal subunit protein uL23cy (93 aa).

Belongs to the universal ribosomal protein uL23 family. In terms of assembly, part of the 50S ribosomal subunit.

The protein resides in the plastid. The protein localises to the chloroplast. Its function is as follows. Binds to 23S rRNA. In Sorghum bicolor (Sorghum), this protein is Large ribosomal subunit protein uL23cy (rpl23-B).